The following is a 127-amino-acid chain: Phospholipase A2 homolog otoconin-22 (127 aa).

A glycan (N-linked (GlcNAc...) asparagine) is linked at Asn20. 7 disulfides stabilise this stretch: Cys26–Cys120, Cys28–Cys44, Cys43–Cys99, Cys49–Cys127, Cys50–Cys92, Cys59–Cys85, and Cys78–Cys90. Residue Asn113 is glycosylated (N-linked (GlcNAc...) asparagine).

This sequence belongs to the phospholipase A2 family. In terms of assembly, monomer. As to expression, otoconial membrane in the maculae of the saccule and utricle. Otoconia are composites of proteins and inorganic crystals formed in the peripheral portion of the vestibular system of vertebrates. The otoconial membranes contain small crystals of calcium carbonate known as otoliths (ear stones) if there is a single deposit or as otoconia (ear dust) if there are many. Each mineral polymorph of otoconia has a protein unique to that polymorph.

It is found in the secreted. Its function is as follows. Major protein of the aragonitic otoconia. It is unlikely that this protein has phospholipase A2 activity. The sequence is that of Phospholipase A2 homolog otoconin-22 from Xenopus laevis (African clawed frog).